Consider the following 1107-residue polypeptide: Unconventional myosin-Ie (1107 aa).

A Myosin motor domain is found at 19–692; that stretch reads SGVDDMVLLS…SLFLLEEMRE (674 aa). 112–119 serves as a coordination point for ATP; the sequence is GESGAGKT. The tract at residues 581–591 is actin-binding; sequence PHYIRCIKPNE. The 30-residue stretch at 695–724 folds into the IQ domain; the sequence is YDGYARVIQKTWRKFVARKKYVQMREDASD. Positions 730–922 constitute a TH1 domain; the sequence is KERRRNSINR…NKVLQVSIGP (193 aa). The interval 920–1052 is disordered; that stretch reads IGPGLPKNAR…KPQPKPKPQV (133 aa). Polar residues-rich tracts occupy residues 933–949, 977–989, and 998–1012; these read RNTV…NNNY, SGNQ…SLYT, and RQQS…QTPE. The residue at position 1001 (Ser-1001) is a Phosphoserine. The segment covering 1034 to 1051 has biased composition (pro residues); sequence RPPPAGGRPKPQPKPKPQ. Residues 1050–1107 enclose the SH3 domain; the sequence is PQVPQCKALYAYDAQDTDELSFNANDVIDIIKEDPSGWWTGRLRGKQGLFPNNYVTKI.

It belongs to the TRAFAC class myosin-kinesin ATPase superfamily. Myosin family. Interacts with CALM and F-actin. Interacts (via SH3 domain) with SYNJ1, DNM1 and DNM2. Interacts with ARL14EP. Interacts with CARMIL1. In terms of tissue distribution, detected in brain stem, brain cortex, cerebellum, stomach, colon, heart, lung, liver, spleen and kidney. Detected in utricle, cochlea, outer hair cell bundle cuticular plate and vestibular epithelia (at protein level). Detected in cochlea and vestibular tissues. Detected in kidney, lung, spleen and intestine.

It localises to the cytoplasm. The protein localises to the cytoskeleton. It is found in the cytoplasmic vesicle. Its subcellular location is the clathrin-coated vesicle. The protein resides in the cell junction. Myosins are actin-based motor molecules with ATPase activity. Unconventional myosins serve in intracellular movements. Their highly divergent tails bind to membranous compartments, which are then moved relative to actin filaments. Binds to membranes containing anionic phospholipids via its tail domain. Involved in clathrin-mediated endocytosis and intracellular movement of clathrin-coated vesicles. Required for normal morphology of the glomerular basement membrane, normal development of foot processes by kidney podocytes and normal kidney function. In dendritic cells, may control the movement of class II-containing cytoplasmic vesicles along the actin cytoskeleton by connecting them with the actin network via ARL14EP and ARL14. This is Unconventional myosin-Ie (Myo1e) from Rattus norvegicus (Rat).